A 105-amino-acid polypeptide reads, in one-letter code: Large ribosomal subunit protein bL21 (105 aa).

Belongs to the bacterial ribosomal protein bL21 family. In terms of assembly, part of the 50S ribosomal subunit. Contacts protein L20.

Its function is as follows. This protein binds to 23S rRNA in the presence of protein L20. The polypeptide is Large ribosomal subunit protein bL21 (Porphyromonas gingivalis (strain ATCC BAA-308 / W83)).